We begin with the raw amino-acid sequence, 699 residues long: Proline-rich receptor-like protein kinase PERK7 (699 aa).

Residues 1–167 (MAEGQSPENS…TSNSGSNSSS (167 aa)) are disordered. At 1–172 (MAEGQSPENS…SNSSSNDGLN (172 aa)) the chain is on the extracellular side. 2 stretches are compositionally biased toward pro residues: residues 9–23 (NSPPAPPPPSPPSPP) and 43–68 (SPPPPSSPDIAPPPQQQQESPPPPLP). Residue Asn-70 is glycosylated (N-linked (GlcNAc...) asparagine). Low complexity predominate over residues 100–121 (PPQQSDNNGNKGNNNENNKGND). An N-linked (GlcNAc...) asparagine glycan is attached at Asn-131. The segment covering 148–158 (HSQPRSLAPPT) has biased composition (polar residues). N-linked (GlcNAc...) asparagine glycosylation occurs at Asn-164. A helical membrane pass occupies residues 173 to 193 (IGAVIGLVAAAGILFIVMILL). At 194 to 699 (CVCCFRKKKK…SKTTTTNRGI (506 aa)) the chain is on the cytoplasmic side. Thr-325 carries the post-translational modification Phosphothreonine. The 280-residue stretch at 336-615 (FSKDRLLGQG…VRTLEGDASL (280 aa)) folds into the Protein kinase domain. ATP is bound by residues 342-350 (LGQGGFGYV) and Lys-364. Tyr-410 bears the Phosphotyrosine mark. Asp-461 (proton acceptor) is an active-site residue. Ser-465 and Ser-494 each carry phosphoserine. 2 positions are modified to phosphothreonine: Thr-495 and Thr-500. A Phosphotyrosine modification is found at Tyr-508. 2 disordered regions span residues 609 to 639 (LEGDASLDDLDDGVKPKQSSSGGEGSSDYEM) and 658 to 699 (DYGA…NRGI). The segment covering 687-699 (GSTSKTTTTNRGI) has biased composition (polar residues).

Belongs to the protein kinase superfamily. Ser/Thr protein kinase family. As to expression, mostly expressed in flower buds.

The protein localises to the cell membrane. It catalyses the reaction L-seryl-[protein] + ATP = O-phospho-L-seryl-[protein] + ADP + H(+). It carries out the reaction L-threonyl-[protein] + ATP = O-phospho-L-threonyl-[protein] + ADP + H(+). This chain is Proline-rich receptor-like protein kinase PERK7 (PERK7), found in Arabidopsis thaliana (Mouse-ear cress).